The sequence spans 391 residues: Mannose-6-phosphate isomerase (391 aa).

Zn(2+) contacts are provided by Q97, H99, E134, and H255. R274 is a catalytic residue. K280 is subject to N6-acetyllysine.

The protein belongs to the mannose-6-phosphate isomerase type 1 family. Zn(2+) is required as a cofactor.

Its subcellular location is the cytoplasm. It catalyses the reaction D-mannose 6-phosphate = D-fructose 6-phosphate. Functionally, involved in the conversion of glucose to GDP-L-fucose, which can be converted to L-fucose, a capsular polysaccharide. This chain is Mannose-6-phosphate isomerase (manA), found in Shigella flexneri.